Consider the following 634-residue polypeptide: 1-deoxy-D-xylulose-5-phosphate synthase (634 aa).

Thiamine diphosphate contacts are provided by residues H79 and 120 to 122 (GHA). D151 contributes to the Mg(2+) binding site. Thiamine diphosphate-binding positions include 152 to 153 (GS), N180, Y292, and E376. N180 is a binding site for Mg(2+).

Belongs to the transketolase family. DXPS subfamily. In terms of assembly, homodimer. The cofactor is Mg(2+). It depends on thiamine diphosphate as a cofactor.

The catalysed reaction is D-glyceraldehyde 3-phosphate + pyruvate + H(+) = 1-deoxy-D-xylulose 5-phosphate + CO2. The protein operates within metabolic intermediate biosynthesis; 1-deoxy-D-xylulose 5-phosphate biosynthesis; 1-deoxy-D-xylulose 5-phosphate from D-glyceraldehyde 3-phosphate and pyruvate: step 1/1. Catalyzes the acyloin condensation reaction between C atoms 2 and 3 of pyruvate and glyceraldehyde 3-phosphate to yield 1-deoxy-D-xylulose-5-phosphate (DXP). This is 1-deoxy-D-xylulose-5-phosphate synthase from Porphyromonas gingivalis (strain ATCC BAA-308 / W83).